The chain runs to 434 residues: Glutamate-1-semialdehyde 2,1-aminomutase (434 aa).

Residue Lys-274 is modified to N6-(pyridoxal phosphate)lysine.

The protein belongs to the class-III pyridoxal-phosphate-dependent aminotransferase family. HemL subfamily. Homodimer. The cofactor is pyridoxal 5'-phosphate.

Its subcellular location is the cytoplasm. It carries out the reaction (S)-4-amino-5-oxopentanoate = 5-aminolevulinate. The protein operates within porphyrin-containing compound metabolism; protoporphyrin-IX biosynthesis; 5-aminolevulinate from L-glutamyl-tRNA(Glu): step 2/2. This chain is Glutamate-1-semialdehyde 2,1-aminomutase, found in Acidovorax ebreus (strain TPSY) (Diaphorobacter sp. (strain TPSY)).